The sequence spans 407 residues: Probable acyl-CoA dehydrogenase FadE2 (407 aa).

It belongs to the acyl-CoA dehydrogenase family. The cofactor is FAD.

The enzyme catalyses a 2,3-saturated acyl-CoA + A = a 2,3-dehydroacyl-CoA + AH2. This chain is Probable acyl-CoA dehydrogenase FadE2, found in Mycobacterium tuberculosis (strain ATCC 25618 / H37Rv).